The following is a 78-amino-acid chain: Large ribosomal subunit protein bL28B (78 aa).

Positions 1–29 (MSAHCQVTGRKPGFGNTVSHSHRRSRRRW) are disordered. A compositionally biased stretch (basic residues) spans 20 to 29 (HSHRRSRRRW).

It belongs to the bacterial ribosomal protein bL28 family.

This Mycobacterium bovis (strain ATCC BAA-935 / AF2122/97) protein is Large ribosomal subunit protein bL28B (rpmB2).